A 190-amino-acid polypeptide reads, in one-letter code: Elongation factor P (190 aa).

The protein belongs to the elongation factor P family.

The protein resides in the cytoplasm. Its pathway is protein biosynthesis; polypeptide chain elongation. Involved in peptide bond synthesis. Stimulates efficient translation and peptide-bond synthesis on native or reconstituted 70S ribosomes in vitro. Probably functions indirectly by altering the affinity of the ribosome for aminoacyl-tRNA, thus increasing their reactivity as acceptors for peptidyl transferase. The sequence is that of Elongation factor P from Persephonella marina (strain DSM 14350 / EX-H1).